The sequence spans 213 residues: Virion protein US10 homolog (213 aa).

This sequence belongs to the herpesviridae US10 family. Post-translationally, phosphorylated.

The protein localises to the virion tegument. Its subcellular location is the host nucleus matrix. The sequence is that of Virion protein US10 homolog (US639) from Gallid herpesvirus 2 (strain GA) (GaHV-2).